Reading from the N-terminus, the 389-residue chain is Inner membrane transport protein YdhP (389 aa).

Residues 1–6 are Cytoplasmic-facing; the sequence is MKINYP. Residues 7 to 27 traverse the membrane as a helical segment; the sequence is LLALAIGAFGIGTTEFSPMGL. Residues 28–43 lie on the Periplasmic side of the membrane; sequence LPVIARGVDVSIPAAG. A helical transmembrane segment spans residues 44-64; the sequence is MLISAYAVGVMVGAPLMTLLL. Residues 65-70 lie on the Cytoplasmic side of the membrane; it reads SHRARR. Residues 71–91 traverse the membrane as a helical segment; the sequence is SALIFLMAIFTLGNVLSAIAP. Residues 92–100 are Periplasmic-facing; it reads DYMTLMLSR. Residues 101–121 form a helical membrane-spanning segment; that stretch reads ILTSLNHGAFFGLGSVVAASV. The Cytoplasmic portion of the chain corresponds to 122 to 130; it reads VPKHKQASA. The helical transmembrane segment at 131–151 threads the bilayer; sequence VATMFMGLTLANIGGVPAATW. Topologically, residues 152-159 are periplasmic; that stretch reads LGETIGWR. A helical membrane pass occupies residues 160–180; the sequence is MSFLATAGLGVISMVSLFFSL. At 181 to 203 the chain is on the cytoplasmic side; that stretch reads PKGGAGARPEVKKELAVLMRPQV. The chain crosses the membrane as a helical span at residues 204–224; the sequence is LSALLTTVLGAGAMFTLYTYI. The Periplasmic portion of the chain corresponds to 225-236; it reads SPVLQSITHATP. A helical transmembrane segment spans residues 237 to 257; the sequence is VFVTAMLVLIGVGFSIGNYLG. The Cytoplasmic portion of the chain corresponds to 258-266; sequence GKLADRSVN. Residues 267–287 form a helical membrane-spanning segment; that stretch reads GTLKGFLLLLMVIMLAIPFLA. Residues 288–290 lie on the Periplasmic side of the membrane; that stretch reads RNE. Residues 291–311 traverse the membrane as a helical segment; that stretch reads FGAAISMVVWGAATFAVVPPL. Over 312–330 the chain is Cytoplasmic; it reads QMRVMRVASEAPGLSSSVN. Residues 331–351 form a helical membrane-spanning segment; it reads IGAFNLGNALGAAAGGAVISA. The Periplasmic portion of the chain corresponds to 352-356; it reads GLGYS. A helical membrane pass occupies residues 357-377; it reads FVPVMGAIVAGLALLLVFMSA. Residues 378 to 389 are Cytoplasmic-facing; it reads RKQPETVCVANS.

It belongs to the major facilitator superfamily.

It is found in the cell inner membrane. The sequence is that of Inner membrane transport protein YdhP (ydhP) from Escherichia coli (strain K12).